Consider the following 86-residue polypeptide: Large ribosomal subunit protein bL27 (86 aa).

The protein belongs to the bacterial ribosomal protein bL27 family.

The polypeptide is Large ribosomal subunit protein bL27 (Flavobacterium psychrophilum (strain ATCC 49511 / DSM 21280 / CIP 103535 / JIP02/86)).